A 201-amino-acid polypeptide reads, in one-letter code: Glycerol-3-phosphate acyltransferase (201 aa).

Helical transmembrane passes span leucine 3–leucine 23, tryptophan 53–glycine 73, histidine 80–phenylalanine 100, isoleucine 115–phenylalanine 135, and phenylalanine 153–tyrosine 175.

This sequence belongs to the PlsY family. In terms of assembly, probably interacts with PlsX.

The protein resides in the cell inner membrane. It carries out the reaction an acyl phosphate + sn-glycerol 3-phosphate = a 1-acyl-sn-glycero-3-phosphate + phosphate. The protein operates within lipid metabolism; phospholipid metabolism. Catalyzes the transfer of an acyl group from acyl-phosphate (acyl-PO(4)) to glycerol-3-phosphate (G3P) to form lysophosphatidic acid (LPA). This enzyme utilizes acyl-phosphate as fatty acyl donor, but not acyl-CoA or acyl-ACP. The polypeptide is Glycerol-3-phosphate acyltransferase (Pasteurella multocida (strain Pm70)).